The chain runs to 430 residues: DNA-binding protein cre-1 (430 aa).

The span at 1-19 (MQRVQSAVDFSNLLNPSES) shows a compositional bias: polar residues. Disordered stretches follow at residues 1-77 (MQRV…LPRP), 97-187 (IRTH…PHSY), 265-340 (SRSH…RNLS), and 357-430 (LDGQ…MDRL). Over residues 30-46 (PRQQTAQPQQQQQQPQP) the composition is skewed to low complexity. C2H2-type zinc fingers lie at residues 78 to 100 (YKCP…IRTH) and 106 to 130 (HACQ…SRIH). Over residues 97–106 (IRTHTGEKPH) the composition is skewed to basic and acidic residues. Composition is skewed to polar residues over residues 130-147 (HSNP…QQQH) and 175-187 (AMSS…PHSY). Positions 268-277 (HSHEDHDDHY) are enriched in basic and acidic residues. The segment covering 289–303 (PNSPNSTAPSSPTFS) has biased composition (low complexity). Positions 412-422 (SVRNSSSTSLS) are enriched in polar residues.

It belongs to the creA/MIG C2H2-type zinc-finger protein family.

It localises to the nucleus. Its function is as follows. Involved in carbon catabolite repression. Represses the transcription of a number of genes by binding to a GC-rich region in their promoter. This Neurospora crassa (strain ATCC 24698 / 74-OR23-1A / CBS 708.71 / DSM 1257 / FGSC 987) protein is DNA-binding protein cre-1 (cre-1).